A 255-amino-acid chain; its full sequence is 5'-nucleotidase SurE (255 aa).

Aspartate 8, aspartate 9, serine 40, and asparagine 93 together coordinate a divalent metal cation.

The protein belongs to the SurE nucleotidase family. A divalent metal cation serves as cofactor.

It is found in the cytoplasm. It catalyses the reaction a ribonucleoside 5'-phosphate + H2O = a ribonucleoside + phosphate. Functionally, nucleotidase that shows phosphatase activity on nucleoside 5'-monophosphates. This chain is 5'-nucleotidase SurE, found in Nitrobacter winogradskyi (strain ATCC 25391 / DSM 10237 / CIP 104748 / NCIMB 11846 / Nb-255).